We begin with the raw amino-acid sequence, 66 residues long: Clarkitoxin-1 (66 aa).

Cystine bridges form between C3–C24, C17–C42, C46–C59, and C60–C65.

Expressed by the venom gland.

It localises to the secreted. Its function is as follows. Not toxic to mice when injected intravenously or intraperitoneally. In Micrurus clarki (Clark's coral snake), this protein is Clarkitoxin-1.